The primary structure comprises 375 residues: Lipid-A-disaccharide synthase (375 aa).

The protein belongs to the LpxB family.

The catalysed reaction is a lipid X + a UDP-2-N,3-O-bis[(3R)-3-hydroxyacyl]-alpha-D-glucosamine = a lipid A disaccharide + UDP + H(+). The protein operates within bacterial outer membrane biogenesis; LPS lipid A biosynthesis. In terms of biological role, condensation of UDP-2,3-diacylglucosamine and 2,3-diacylglucosamine-1-phosphate to form lipid A disaccharide, a precursor of lipid A, a phosphorylated glycolipid that anchors the lipopolysaccharide to the outer membrane of the cell. The protein is Lipid-A-disaccharide synthase of Pseudomonas entomophila (strain L48).